The sequence spans 250 residues: Ubiquinone/menaquinone biosynthesis C-methyltransferase UbiE (250 aa).

Residues Ser73, Asp94, and 122-123 each bind S-adenosyl-L-methionine; that span reads NA.

Belongs to the class I-like SAM-binding methyltransferase superfamily. MenG/UbiE family.

The catalysed reaction is a 2-demethylmenaquinol + S-adenosyl-L-methionine = a menaquinol + S-adenosyl-L-homocysteine + H(+). It carries out the reaction a 2-methoxy-6-(all-trans-polyprenyl)benzene-1,4-diol + S-adenosyl-L-methionine = a 5-methoxy-2-methyl-3-(all-trans-polyprenyl)benzene-1,4-diol + S-adenosyl-L-homocysteine + H(+). The protein operates within quinol/quinone metabolism; menaquinone biosynthesis; menaquinol from 1,4-dihydroxy-2-naphthoate: step 2/2. It functions in the pathway cofactor biosynthesis; ubiquinone biosynthesis. Functionally, methyltransferase required for the conversion of demethylmenaquinol (DMKH2) to menaquinol (MKH2) and the conversion of 2-polyprenyl-6-methoxy-1,4-benzoquinol (DDMQH2) to 2-polyprenyl-3-methyl-6-methoxy-1,4-benzoquinol (DMQH2). The polypeptide is Ubiquinone/menaquinone biosynthesis C-methyltransferase UbiE (Legionella pneumophila (strain Paris)).